The chain runs to 644 residues: 2-isopropylmalate synthase (644 aa).

Residues 1 to 40 (MTTSESPDAYTESFGAHTIVKPAGPPRVGQPSWNPQRASS) are disordered. Residues 31–40 (PSWNPQRASS) show a composition bias toward polar residues. The Pyruvate carboxyltransferase domain occupies 72–346 (PLWCAVDLRD…DPQIDFSNID (275 aa)). Residues Asp81, His285, His287, and Asn321 each coordinate Mg(2+). The interval 491-644 (PVRPLERIRQ…VVSAVNRAAR (154 aa)) is regulatory domain. A VNTR1 repeat occupies 575-593 (VTIASPAQPGEAGRHASDP). Positions 581-612 (AQPGEAGRHASDPVTIASPAQPGEAGRHASDP) are disordered. Residues 594–612 (VTIASPAQPGEAGRHASDP) form a VNTR2 repeat.

It belongs to the alpha-IPM synthase/homocitrate synthase family. LeuA type 2 subfamily. Homodimer. Mg(2+) is required as a cofactor.

Its subcellular location is the cytoplasm. It catalyses the reaction 3-methyl-2-oxobutanoate + acetyl-CoA + H2O = (2S)-2-isopropylmalate + CoA + H(+). It functions in the pathway amino-acid biosynthesis; L-leucine biosynthesis; L-leucine from 3-methyl-2-oxobutanoate: step 1/4. Its function is as follows. Catalyzes the condensation of the acetyl group of acetyl-CoA with 3-methyl-2-oxobutanoate (2-ketoisovalerate) to form 3-carboxy-3-hydroxy-4-methylpentanoate (2-isopropylmalate). The chain is 2-isopropylmalate synthase from Mycobacterium tuberculosis (strain CDC 1551 / Oshkosh).